A 186-amino-acid polypeptide reads, in one-letter code: Casparian strip membrane protein 3 (186 aa).

Residues 1 to 26 (MKGSSEHGETSKAAPLGRGGVSKGVS) are Cytoplasmic-facing. Residues 27–47 (VLDLILRFIAIIGTLASAIAM) form a helical membrane-spanning segment. The Extracellular portion of the chain corresponds to 48–74 (GTTNETLPFFTQFIRFKAQYSDLPTLT). Asn-51 carries an N-linked (GlcNAc...) asparagine glycan. A helical membrane pass occupies residues 75–95 (FFVVANSIVCAYLILSLPLSI). The Cytoplasmic segment spans residues 96–107 (VHIIRSRAKYSR). The chain crosses the membrane as a helical span at residues 108–128 (LLLIFLDAAMLALVTAGASAA). The Extracellular portion of the chain corresponds to 129–161 (AAIVYLAHKGNVRANWLAICQQFDSFCERISGS). A helical transmembrane segment spans residues 162–182 (LIGSFGAMVMLILLILLSAIA). The Cytoplasmic segment spans residues 183 to 186 (LARR).

Belongs to the Casparian strip membrane proteins (CASP) family. As to quaternary structure, homodimer and heterodimers.

It is found in the cell membrane. In terms of biological role, regulates membrane-cell wall junctions and localized cell wall deposition. Required for establishment of the Casparian strip membrane domain (CSD) and the subsequent formation of Casparian strips, a cell wall modification of the root endodermis that determines an apoplastic barrier between the intraorganismal apoplasm and the extraorganismal apoplasm and prevents lateral diffusion. The protein is Casparian strip membrane protein 3 of Sorghum bicolor (Sorghum).